A 360-amino-acid polypeptide reads, in one-letter code: MILSPQSQLLERNIALFDEGQWAFINPSDAYFLDGLKSQEVTVIHQYFDIFAECVRVIPSASFDSRDITSKGFEVSQKVGNHTHIFTPFVALEKSHTDVMISLPKAKTHFQMLLRMAASMVGQNGRIHVVGENKGGIKSAAKLMQQYGATQKVDSARHCSLITVIVEAPHLAFEAEAWIDTNTYAVEGTSWKVASMPGVFSYKELDAGTELLLEKLSTSLSGDVLDFACGAGVIASYIMLKYPHLKLHLTDVSALAIYCSALTLAENQLAATLYAADGLHGMTNKVQHIVTNPPFHTGIKTDYTVTKRFISDAKARLTRGGTMQMVANRFLPYPGLLSEHFQTVYTTAQTSQFSVYQATL.

This sequence belongs to the methyltransferase superfamily. RsmC family. Monomer.

It localises to the cytoplasm. It catalyses the reaction guanosine(1207) in 16S rRNA + S-adenosyl-L-methionine = N(2)-methylguanosine(1207) in 16S rRNA + S-adenosyl-L-homocysteine + H(+). Functionally, specifically methylates the guanine in position 1207 of 16S rRNA in the 30S particle. This chain is Ribosomal RNA small subunit methyltransferase C, found in Alteromonas mediterranea (strain DSM 17117 / CIP 110805 / LMG 28347 / Deep ecotype).